Here is a 582-residue protein sequence, read N- to C-terminus: Myoneurin (582 aa).

In terms of domain architecture, BTB spans 24–89 (CDCTIVIGEF…IYTGTLNLDS (66 aa)). A disordered region spans residues 169 to 197 (QGALAKKSSQTKKKKKAFNSPKTGQNKTV). 2 consecutive short sequence motifs (nuclear localization signal) follow at residues 174-190 (KKSS…NSPK) and 257-262 (KRKRGK). Over residues 188–197 (SPKTGQNKTV) the composition is skewed to polar residues. Ser289 carries the phosphoserine modification. A C2H2-type 1; degenerate zinc finger spans residues 302–324 (PMCNTRGKVFSEASSLRRHMRIH). 6 C2H2-type zinc fingers span residues 330 to 352 (YVCH…VRTH), 358 to 381 (YKCE…RMHH), 387 to 409 (YKCD…ARKH), 415 to 437 (YVCD…VRRH), 443 to 465 (YVCD…SRKH), and 471 to 494 (FICE…TKVH). The interval 489-538 (HKTKVHSGADKTPDSSAEDHTLSEQDSIQKSPLSETMDVKPSDTTLPLAL) is disordered. Residues 495–511 (SGADKTPDSSAEDHTLS) are compositionally biased toward basic and acidic residues. Polar residues predominate over residues 512–522 (EQDSIQKSPLS).

Belongs to the krueppel C2H2-type zinc-finger protein family.

It localises to the nucleus. This Pongo abelii (Sumatran orangutan) protein is Myoneurin (MYNN).